Consider the following 891-residue polypeptide: 26S proteasome non-ATPase regulatory subunit 2 homolog B (891 aa).

The disordered stretch occupies residues 1–43 (MAPVPDPNSVGGGAKRDEATTKIPSKDSKKKDDKKEEDLSEED). The span at 14 to 37 (AKRDEATTKIPSKDSKKKDDKKEE) shows a compositional bias: basic and acidic residues. 7 PC repeats span residues 414-447 (SAVA…PVVA), 448-484 (GALL…SVRI), 485-519 (GAIM…PLDV), 522-556 (FAAL…AELG), 565-594 (LGLG…KIRK), 674-705 (LALG…EVAM), and 724-739 (AGML…KDAS).

Belongs to the proteasome subunit S2 family. In terms of assembly, component of the 19S regulatory particle (RP/PA700) base subcomplex of the 26S proteasome. The 26S proteasome is composed of a core protease (CP), known as the 20S proteasome, capped at one or both ends by the 19S regulatory particle (RP/PA700). The RP/PA700 complex is composed of at least 17 different subunits in two subcomplexes, the base and the lid, which form the portions proximal and distal to the 20S proteolytic core, respectively. In terms of processing, ubiquitinated. Expressed in stems, leaves, buds, flowers, siliques and developing seeds.

Functionally, acts as a regulatory subunit of the 26 proteasome which is involved in the ATP-dependent degradation of ubiquitinated proteins. The polypeptide is 26S proteasome non-ATPase regulatory subunit 2 homolog B (RPN1B) (Arabidopsis thaliana (Mouse-ear cress)).